The following is a 206-amino-acid chain: Cytidylate kinase (206 aa).

7 to 15 (GPAASGKGT) is a binding site for ATP.

It belongs to the cytidylate kinase family. Type 1 subfamily.

The protein resides in the cytoplasm. It carries out the reaction CMP + ATP = CDP + ADP. It catalyses the reaction dCMP + ATP = dCDP + ADP. This chain is Cytidylate kinase, found in Azorhizobium caulinodans (strain ATCC 43989 / DSM 5975 / JCM 20966 / LMG 6465 / NBRC 14845 / NCIMB 13405 / ORS 571).